The primary structure comprises 635 residues: Threonine--tRNA ligase (635 aa).

Residues Met-1–Thr-61 form the TGS domain. The tract at residues Asp-242–Pro-533 is catalytic. Residues Cys-333, His-384, and His-510 each coordinate Zn(2+).

Belongs to the class-II aminoacyl-tRNA synthetase family. As to quaternary structure, homodimer. It depends on Zn(2+) as a cofactor.

It localises to the cytoplasm. The enzyme catalyses tRNA(Thr) + L-threonine + ATP = L-threonyl-tRNA(Thr) + AMP + diphosphate + H(+). Catalyzes the attachment of threonine to tRNA(Thr) in a two-step reaction: L-threonine is first activated by ATP to form Thr-AMP and then transferred to the acceptor end of tRNA(Thr). Also edits incorrectly charged L-seryl-tRNA(Thr). The protein is Threonine--tRNA ligase of Burkholderia ambifaria (strain ATCC BAA-244 / DSM 16087 / CCUG 44356 / LMG 19182 / AMMD) (Burkholderia cepacia (strain AMMD)).